The chain runs to 734 residues: MALRFPRFSQGLAQDPTTRRIWFGIATAHDFESHDDITEERLYQNIFASHFGQLAIIFLWTSGNLFHVAWQGNFESWVRDPLHVRPIAHAIWDPHFGQPAVEAFTRGGALGPVNIAYSGVYQWWYTIGLRTNEDLYTGALFLLFLSAVSLIAGWLHLQPKWKPSVSWFKNAESRLNHHLSGLFGVSSLAWTGHLVHVAIPGSRGEYVRWNNFLDVLPHPQGLGPLFTGQWNLYAQNPDSSSHLFGTAQGAGTAILTLLGGFHPQTQSLWLTDIAHHHLAIALIFLVAGHMYRTNFGIGHSMKDLLEAHTPPGGRLGRGHKGLYDTINNSVHFQLGLALASLGVITSLVAQHMYSLPAYAFIAQDFTTQAALYTHHQYIAGFIMTGAFAHGAIFFIRDYNPEQNKDNVLARMLDHKEAIISHLSWASLFLGFHTLGLYVHNDVMLAFGTPEKQILIEPIFAQWIQSAHGKTSYGFDVLLSSTNSPAFNAGRSIWLPGWLNAVNENSNSLFLTIGPGDFLVHHAIALGLHTTTLILVKGALDARGSKLMPDKKDFGYSFPCDGPGRGGTCDISAWDAFYLAVFWMLNTIGWVTFYWHWKHITLWQGNVSQFNESSTYLMGWLRDYLWLNSSQLINGYNPFGMNSLSVWAWMFLFGHLVWATGFMFLISWRGYWQELIETLAWAHERTPLANLIRWRDKPVALSIVQARLVGLAHFSVGYIFTYAAFLIASTSGKFG.

8 helical membrane-spanning segments follow: residues 46–69 (IFAS…FHVA), 135–158 (LYTG…LHLQ), 175–199 (LNHH…HVAI), 273–291 (IAHH…GHMY), 330–353 (VHFQ…QHMY), 369–395 (AALY…IFFI), 417–439 (AIIS…LYVH), and 517–535 (FLVH…LILV). [4Fe-4S] cluster is bound by residues Cys559 and Cys568. A run of 2 helical transmembrane segments spans residues 575–596 (AFYL…YWHW) and 643–665 (LSVW…MFLI). His654, Met662, and Tyr670 together coordinate chlorophyll a. A phylloquinone-binding site is contributed by Trp671. The chain crosses the membrane as a helical span at residues 707-727 (LVGLAHFSVGYIFTYAAFLIA).

Belongs to the PsaA/PsaB family. As to quaternary structure, the PsaA/B heterodimer binds the P700 chlorophyll special pair and subsequent electron acceptors. PSI consists of a core antenna complex that captures photons, and an electron transfer chain that converts photonic excitation into a charge separation. The eukaryotic PSI reaction center is composed of at least 11 subunits. Requires P700 is a chlorophyll a/chlorophyll a' dimer, A0 is one or more chlorophyll a, A1 is one or both phylloquinones and FX is a shared 4Fe-4S iron-sulfur center. as cofactor.

It localises to the plastid. The protein localises to the chloroplast thylakoid membrane. It carries out the reaction reduced [plastocyanin] + hnu + oxidized [2Fe-2S]-[ferredoxin] = oxidized [plastocyanin] + reduced [2Fe-2S]-[ferredoxin]. Its function is as follows. PsaA and PsaB bind P700, the primary electron donor of photosystem I (PSI), as well as the electron acceptors A0, A1 and FX. PSI is a plastocyanin-ferredoxin oxidoreductase, converting photonic excitation into a charge separation, which transfers an electron from the donor P700 chlorophyll pair to the spectroscopically characterized acceptors A0, A1, FX, FA and FB in turn. Oxidized P700 is reduced on the lumenal side of the thylakoid membrane by plastocyanin. The chain is Photosystem I P700 chlorophyll a apoprotein A2 from Platanus occidentalis (Sycamore).